A 357-amino-acid chain; its full sequence is GDP-mannose transporter 2 (357 aa).

Residues 1 to 43 lie on the Cytoplasmic side of the membrane; the sequence is MASTRNGISKDELLPTYELQSQRDVENSGSVTSFASKISNNAA. Residues 44–64 form a helical membrane-spanning segment; sequence AAVLAYCLSSISMTLVNKYVV. The Lumenal portion of the chain corresponds to 65–68; sequence SGAS. Residues 69–89 traverse the membrane as a helical segment; it reads WNLSFLYLAIQSFIGTVAIMV. Residues 90 to 107 are Cytoplasmic-facing; the sequence is CKKAGLIQNLGLFDLKKA. A helical transmembrane segment spans residues 108–128; it reads QTWLPISLLLVGMIYTGNKAL. Residue Gln129 is a topological domain, lumenal. A helical membrane pass occupies residues 130–150; that stretch reads FLSVPVYTIFKNLTIIVIAYG. At 151–161 the chain is on the cytoplasmic side; it reads EVFMVGGSVKP. A helical transmembrane segment spans residues 162-182; the sequence is LALLSFGLMVLSSVVAAWADI. Residues 183–196 are Lumenal-facing; it reads QIATAATAKASSDS. A helical transmembrane segment spans residues 197-217; that stretch reads AVATLSALNAGYAWMGTNVVF. Topologically, residues 218–238 are cytoplasmic; sequence SASYALGMRRVIKKTNFDNWD. The chain crosses the membrane as a helical span at residues 239-259; the sequence is VMFYNNLLSVPILLLSSLLVE. Over 260–277 the chain is Lumenal; the sequence is DWSSENLQRNFPAESRQS. The helical transmembrane segment at 278 to 298 threads the bilayer; sequence LVIGIFYSGVAAIFISYCTAW. Residues 299–306 are Cytoplasmic-facing; it reads CVRATSST. A helical transmembrane segment spans residues 307-327; that stretch reads TYAMVGALNKLPLAVAGIVFF. Over 328–332 the chain is Lumenal; the sequence is AAPVT. The chain crosses the membrane as a helical span at residues 333–352; that stretch reads FGSVSAIVLGFISGLVYTWA. The Cytoplasmic segment spans residues 353–357; that stretch reads KSTGA.

The protein belongs to the TPT transporter family. SLC35D subfamily. As to quaternary structure, homooligomer.

Its subcellular location is the golgi apparatus membrane. The protein resides in the cytoplasmic vesicle membrane. It is found in the endoplasmic reticulum membrane. Functionally, involved in the import of GDP-mannose from the cytoplasm into the Golgi lumen. The chain is GDP-mannose transporter 2 (gmt2) from Emericella nidulans (strain FGSC A4 / ATCC 38163 / CBS 112.46 / NRRL 194 / M139) (Aspergillus nidulans).